The following is a 314-amino-acid chain: Melanoma-associated antigen 2 (314 aa).

Positions 1 to 20 (MPLEQRSQHCKPEEGLEARG) are enriched in basic and acidic residues. A disordered region spans residues 1 to 69 (MPLEQRSQHC…SPPHSPQGAS (69 aa)). Residues 21–44 (EALGLVGAQAPATEEQQTASSSST) show a composition bias toward low complexity. Position 64 is a phosphoserine (serine 64). Residues 109–308 (ISRKMVELVH…ISYPPLHERA (200 aa)) form the MAGE domain.

Interacts with TRIM28 and UBE2H. Interacts with HDAC3. Interacts with PML (isoform PML-1, isoform PML-2, isoform PML-3, isoform PML-4 and isoform PML-5). In terms of tissue distribution, expressed in many tumors of several types, such as melanoma, head and neck squamous cell carcinoma, lung carcinoma and breast carcinoma, but not in normal tissues except for testes.

It is found in the nucleus. It localises to the PML body. In terms of biological role, reduces p53/TP53 transactivation function through recruitment of HDAC3 to p53/TP53 transcription sites. Also represses p73/TP73 activity. Proposed to enhance ubiquitin ligase activity of RING-type zinc finger-containing E3 ubiquitin-protein ligases. In vitro enhances ubiquitin ligase activity of TRIM28 and stimulates p53/TP53 ubiquitination by TRIM28 potentially in presence of Ubl-conjugating enzyme UBE2H. Proposed to act through recruitment and/or stabilization of the Ubl-conjugating enzyme (E2) at the E3:substrate complex. May play a role in embryonal development and tumor transformation or aspects of tumor progression. In vitro promotes cell viability in melanoma cell lines. Antigen recognized on a melanoma by autologous cytolytic T-lymphocytes. Negatively regulates acetylation and sumoylation of PML and represses PML-induced p53/TP53 acetylation and activation. The protein is Melanoma-associated antigen 2 (MAGEA2) of Homo sapiens (Human).